A 467-amino-acid chain; its full sequence is Heat shock factor protein 3 (467 aa).

A DNA-binding region spans residues Val-16 to Ser-121. The interval Leu-128 to Val-201 is hydrophobic repeat HR-A/B. The hydrophobic repeat HR-C stretch occupies residues Ile-364–Phe-389. The disordered stretch occupies residues Glu-427–Cys-449.

This sequence belongs to the HSF family. Homotrimer. As to expression, expressed in most tissues. High levels are found in erythrocytes and low levels in liver.

It localises to the cytoplasm. The protein resides in the nucleus. In terms of biological role, DNA-binding protein that specifically binds heat shock promoter elements (HSE) and activates transcription. HSF3 binds DNA constitutively only when the C-terminal region is deleted. The chain is Heat shock factor protein 3 (HSF3) from Gallus gallus (Chicken).